The following is a 484-amino-acid chain: Glycogen synthase (484 aa).

Residue lysine 18 coordinates ADP-alpha-D-glucose.

It belongs to the glycosyltransferase 1 family. Bacterial/plant glycogen synthase subfamily.

The enzyme catalyses [(1-&gt;4)-alpha-D-glucosyl](n) + ADP-alpha-D-glucose = [(1-&gt;4)-alpha-D-glucosyl](n+1) + ADP + H(+). The protein operates within glycan biosynthesis; glycogen biosynthesis. Its function is as follows. Synthesizes alpha-1,4-glucan chains using ADP-glucose. This chain is Glycogen synthase, found in Vibrio cholerae serotype O1 (strain ATCC 39541 / Classical Ogawa 395 / O395).